The chain runs to 181 residues: 6,7-dimethyl-8-ribityllumazine synthase (181 aa).

Residues Y27, 58–60 (ALE), and 87–89 (CVI) contribute to the 5-amino-6-(D-ribitylamino)uracil site. 92-93 (ET) is a binding site for (2S)-2-hydroxy-3-oxobutyl phosphate. H95 acts as the Proton donor in catalysis. 5-amino-6-(D-ribitylamino)uracil is bound at residue N120. Residue R134 participates in (2S)-2-hydroxy-3-oxobutyl phosphate binding.

This sequence belongs to the DMRL synthase family.

It catalyses the reaction (2S)-2-hydroxy-3-oxobutyl phosphate + 5-amino-6-(D-ribitylamino)uracil = 6,7-dimethyl-8-(1-D-ribityl)lumazine + phosphate + 2 H2O + H(+). The protein operates within cofactor biosynthesis; riboflavin biosynthesis; riboflavin from 2-hydroxy-3-oxobutyl phosphate and 5-amino-6-(D-ribitylamino)uracil: step 1/2. In terms of biological role, catalyzes the formation of 6,7-dimethyl-8-ribityllumazine by condensation of 5-amino-6-(D-ribitylamino)uracil with 3,4-dihydroxy-2-butanone 4-phosphate. This is the penultimate step in the biosynthesis of riboflavin. In Methylobacterium nodulans (strain LMG 21967 / CNCM I-2342 / ORS 2060), this protein is 6,7-dimethyl-8-ribityllumazine synthase.